The following is a 57-amino-acid chain: ATPAYMSITGTKQGLITAGAFTADSVGNTYQEGFEDQVMVQGFDPAVIIPTGPVYGQ.

Belongs to the hcp1 family. As to quaternary structure, homodimer.

Its subcellular location is the secreted. The protein is Major exported protein of Pseudomonas syringae pv. ribicola.